The chain runs to 3916 residues: Fusarin C synthetase (3916 aa).

The region spanning 9–440 (KEPIAIIGTS…GTNVHAIIEQ (432 aa)) is the Ketosynthase family 3 (KS3) domain. Active-site for beta-ketoacyl synthase activity residues include Cys182, His319, and His360. Positions 548-866 (VFTGQGAQWP…QGTVARNIHD (319 aa)) are malonyl-CoA:ACP transacylase (MAT) domain. Positions 935–1068 (HPLLGARSVE…GQLRVEFGCS (134 aa)) are N-terminal hotdog fold. Residues 935 to 1228 (HPLLGARSVE…GLTCTSLLRP (294 aa)) are dehydratase (DH) domain. One can recognise a PKS/mFAS DH domain in the interval 935–1231 (HPLLGARSVE…CTSLLRPGPS (297 aa)). Catalysis depends on His967, which acts as the Proton acceptor; for dehydratase activity. Residues 1084–1231 (LTSVNMERFY…CTSLLRPGPS (148 aa)) form a C-terminal hotdog fold region. The active-site Proton donor; for dehydratase activity is Asp1141. The C-methyltransferase (CMeT) domain stretch occupies residues 1347–1575 (IQAVGENLPS…VNDFVDAEKY (229 aa)). A ketoreductase (KR) domain 1 region spans residues 2092 to 2266 (TYLLIGCTGG…AASVMHIGMV (175 aa)). Residues 2372–2449 (EILAVVEEEF…ELCSTVVSHL (78 aa)) form the Carrier 1 domain. Ser2409 carries the post-translational modification O-(pantetheine 4'-phosphoryl)serine. The segment at 2487–2510 (NEPFTIRNSPNSTQVTSEAGVDED) is disordered. Residues 2492 to 2503 (IRNSPNSTQVTS) are compositionally biased toward polar residues. The interval 2522–2806 (PLSFAQERLW…VNLLPLRLKI (285 aa)) is condensation. Residues 2975-3385 (EFVVKQPDDT…RIAGDSQIKL (411 aa)) form an adenylation region. Residues 3493–3570 (KPLTETQERL…EMAAKIDGST (78 aa)) form the Carrier 2 domain. Ser3530 carries the post-translational modification O-(pantetheine 4'-phosphoryl)serine. Residues 3612–3833 (LTGATGFLGV…DFVPVDVVAA (222 aa)) are thiolester reductase (R) domain.

The protein in the C-terminal section; belongs to the NRP synthetase family.

It functions in the pathway mycotoxin biosynthesis. Its function is as follows. Fusarin C synthetase; part of the gene cluster that mediates the biosynthesis of the mycotoxin fusarin C. Within the cluster, FUS1, FUS2, FUS8 and FUS9 are sufficient for fusarin production. The roles of the other FUS members are yet undetermined. The fusarin C synthetase FUS1 is responsible for the condensation of one acetyl-coenzyme A (CoA) unit with six malonyl-CoA units and the amide linkage of the arising heptaketide and homoserine, subsequently releasing the first intermediate, prefusarin, as an alcohol with an open ring structure. The cytochrome P450 monooxygenase FUS8 participates in multiple oxidation processes at carbon C-20 and is able to use the FUS1 product as substrate, resulting in formation of 20-hydroxy-prefusarin. This reaction seems to be essential before the 2-pyrrolidone ring closure can be catalyzed by FUS2, generating 20-hydroxy-fusarin. FUS8 is able to further oxidizes carbon C-20 after ring closure, resulting in the formation of carboxy-fusarin C. As the last step, FUS9 methylates the hydroxyl group at C-21 to generate fusarin C. Fusarin C can then rearrange to epi-fusarin C, the (z)-isomers, and fusarin A and fusarin D. This is Fusarin C synthetase from Gibberella fujikuroi (strain CBS 195.34 / IMI 58289 / NRRL A-6831) (Bakanae and foot rot disease fungus).